A 218-amino-acid polypeptide reads, in one-letter code: Histone H1 (218 aa).

Low complexity-rich tracts occupy residues 1 to 19 and 27 to 39; these read MSET…GAKA and AAGG…PAGP. Disordered stretches follow at residues 1-41 and 89-218; these read MSET…GPSV and VGKG…PKKK. Ser2 is modified (N-acetylserine). One can recognise an H15 domain in the interval 37 to 110; that stretch reads AGPSVTELIT…GASGSFKLNK (74 aa). Basic residues-rich tracts occupy residues 119-133, 141-158, 166-184, and 191-218; these read ATKK…KPAA, KKPK…KAKK, KAAK…KKAA, and KAVK…PKKK.

The protein belongs to the histone H1/H5 family.

It localises to the nucleus. The protein resides in the chromosome. In terms of biological role, histones H1 are necessary for the condensation of nucleosome chains into higher-order structures. The polypeptide is Histone H1 (Anas platyrhynchos (Mallard)).